The following is a 354-amino-acid chain: Malate dehydrogenase 2, peroxisomal (354 aa).

A peroxisomal targeting signal PTS2 region spans residues 10–18; sequence RIARISAHL. Residues 49-55 and Asp75 contribute to the NAD(+) site; that span reads GAAGGIG. Residues Arg122 and Arg128 each coordinate substrate. Residues Asn135 and 158 to 160 each bind NAD(+); that span reads ISN. Residues Asn160 and Arg194 each coordinate substrate. His218 (proton acceptor) is an active-site residue. An NAD(+)-binding site is contributed by Met269.

The protein belongs to the LDH/MDH superfamily. MDH type 1 family. As to quaternary structure, homodimer. In terms of tissue distribution, expressed in rosette leaves.

The protein resides in the peroxisome. The catalysed reaction is (S)-malate + NAD(+) = oxaloacetate + NADH + H(+). In terms of biological role, catalyzes a reversible NAD-dependent dehydrogenase reaction involved in central metabolism and redox homeostasis between organelle compartments. Peroxisomal NAD-dependent malate dehydrogenase involved in fatty acid beta-oxidation. Reoxidizes NADH from the beta-oxidation and provides NAD for the conversion of fatty acyl-CoA to acetyl-CoA. Does not participate directly in the glyoxylate cycle. Required for maintenance of photosynthetic rates under photorespiratory conditions, and carbon flow during photorespiration. Supplies NADH reductant to the peroxisomal hydroxypyruvate reductase (HPR), which reduces hydroxypyruvate into glycerate in the photorespiratory cycle. The polypeptide is Malate dehydrogenase 2, peroxisomal (Arabidopsis thaliana (Mouse-ear cress)).